The following is a 245-amino-acid chain: MNVTLLIPARYGSSRFPGKPLAPINGKPMIQHVYERAALAKGLNAIYVATDDERIKDAVESFGGKVVMTGADAASGTDRIEDAITQLGLADDDLVINLQGDQPLIDPISIEQIVELFRRHPGEFEMATLGYQISDKAELDDPKHVKMVFDNDMYALYFSRACIPFGRDVSEYPVYKHLGVYAYTRRFVHTFNSLPLGRLEDLEKLEQLRALEYGHRIKVAISAFDSPEVDTPEDIRRCENRLKVD.

This sequence belongs to the KdsB family.

It is found in the cytoplasm. It catalyses the reaction 8-amino-3,8-dideoxy-alpha-D-manno-octulosonate + CTP = CMP-8-amino-3,8-dideoxy-alpha-D-manno-oct-2-ulosonate + diphosphate. Its pathway is bacterial outer membrane biogenesis; lipopolysaccharide biosynthesis. Functionally, activates KDO8N (a required 8-carbon sugar) for incorporation into bacterial lipopolysaccharide in the Shewanella genus. The protein is 8-amino-3,8-dideoxy-manno-octulosonate cytidylyltransferase of Shewanella amazonensis (strain ATCC BAA-1098 / SB2B).